Here is a 227-residue protein sequence, read N- to C-terminus: Ribose-5-phosphate isomerase A (227 aa).

Substrate is bound by residues 26–29 (TGST), 82–85 (DGAD), and 95–98 (KGGG). Glu104 serves as the catalytic Proton acceptor. Residue Lys122 coordinates substrate.

It belongs to the ribose 5-phosphate isomerase family. As to quaternary structure, homodimer.

It carries out the reaction aldehydo-D-ribose 5-phosphate = D-ribulose 5-phosphate. It participates in carbohydrate degradation; pentose phosphate pathway; D-ribose 5-phosphate from D-ribulose 5-phosphate (non-oxidative stage): step 1/1. Its function is as follows. Catalyzes the reversible conversion of ribose-5-phosphate to ribulose 5-phosphate. The polypeptide is Ribose-5-phosphate isomerase A (Streptococcus pneumoniae serotype 4 (strain ATCC BAA-334 / TIGR4)).